The chain runs to 173 residues: MPRSNRNDNFIDKSFTVMADLIVKLLPINARSKEAYVYYRDGLSAQNDGDYAEALENYDEALKLEDNPTDRGETLKNMAIIYMSNGEEERAIETYRRALDENSNQPSCLKNMGLIFEKWGRIAEEDGRQDDADRWFDQAAEAWTQAVRLNPGGYLDIENWLKSTGRSNVDVYF.

TPR repeat units lie at residues 35–68, 72–105, and 120–153; these read AYVY…EDNP, GETL…NSNQ, and GRIA…NPGG.

The protein belongs to the Ycf3 family.

Its subcellular location is the cellular thylakoid membrane. Essential for the assembly of the photosystem I (PSI) complex. May act as a chaperone-like factor to guide the assembly of the PSI subunits. This is Photosystem I assembly protein Ycf3 from Parasynechococcus marenigrum (strain WH8102).